Reading from the N-terminus, the 1004-residue chain is Hyaluronate lyase HylB (1004 aa).

An N-terminal signal peptide occupies residues 1 to 29 (MKNRKIWVMLVGLFTALTNGFMGTTLTFA). Residues His468, Tyr477, and Arg531 contribute to the active site.

It belongs to the polysaccharide lyase 8 family.

The protein localises to the secreted. It carries out the reaction [hyaluronan](n) = n 3-(4-deoxy-beta-D-gluc-4-enuronosyl)-N-acetyl-D-glucosamine + H2O. The enzyme catalyses Eliminative degradation of polysaccharides containing 1,4-beta-D-hexosaminyl and 1,3-beta-D-glucuronosyl linkages to disaccharides containing 4-deoxy-beta-D-gluc-4-enuronosyl groups.. Degrades hyaluronic acid (HA) and chondroitin sulfate (CS) A in vitro. Is not active against heparin sodium salt (HS). Involved in the pathogenesis of vancomycin-resistant E.faecalis infections. Contributes to attenuation of the lipopolysaccharide (LPS)-mediated nuclear factor (NF)-kappa-B activation assayed in the mouse RAW-Blue reporter macrophages. The sequence is that of Hyaluronate lyase HylB from Enterococcus faecalis (strain ATCC 700802 / V583).